A 483-amino-acid polypeptide reads, in one-letter code: Cobyric acid synthase (483 aa).

The GATase cobBQ-type domain occupies 252–439 (KLKVVVPVLT…LHGFLDSEAV (188 aa)). The Nucleophile role is filled by C333. Residue H431 is part of the active site.

This sequence belongs to the CobB/CobQ family. CobQ subfamily.

It functions in the pathway cofactor biosynthesis; adenosylcobalamin biosynthesis. Functionally, catalyzes amidations at positions B, D, E, and G on adenosylcobyrinic A,C-diamide. NH(2) groups are provided by glutamine, and one molecule of ATP is hydrogenolyzed for each amidation. This is Cobyric acid synthase from Vibrio vulnificus (strain CMCP6).